A 199-amino-acid chain; its full sequence is Probable GTP-binding protein EngB (199 aa).

Residues 21–195 form the EngB-type G domain; it reads IYTEIAFLGR…EQKIILESLG (175 aa). Residues 29 to 36, 56 to 60, 81 to 84, 151 to 154, and 174 to 176 contribute to the GTP site; these read GRSNVGKS, GKTQL, DLPG, TKAD, and VSN. Mg(2+) is bound by residues Ser-36 and Thr-58.

This sequence belongs to the TRAFAC class TrmE-Era-EngA-EngB-Septin-like GTPase superfamily. EngB GTPase family. Mg(2+) serves as cofactor.

Its function is as follows. Necessary for normal cell division and for the maintenance of normal septation. The chain is Probable GTP-binding protein EngB from Campylobacter lari (strain RM2100 / D67 / ATCC BAA-1060).